We begin with the raw amino-acid sequence, 460 residues long: MQSIILIGKPNVGKSSLFNRMARQRIAITSDISGTTRDTNKTQIHIHSKKAMLIDSGGLDESDELFKNVKKNTLKVAKESDIILYLVDGKLAPDDEDRQFFYSLKKLGKPIALVVNKVDNKKDEERAWEFANFGVKEIFNLSVTHNVGLDELYEWLEKFLHEEFLIPDEEENLEDFLEHYEEGKEFQFKEVDQNHIRVGIVGRVNVGKSSLLNALVKQERSVVSSIAGTTIDPVNESVVHKDKVIEFVDTAGIRKRGKIQGLERFALNRTEKILSHSQIALLVLDAHEGFNELDERIAGLVAKHYLGVIIVLNKWDKSEMDFDKTVKELHLDRFKFLAYAPVISVSALSGKRVHVLLDKILQIFENFTQKIQTSKLNTLIENATRSHPLPHDYGKLVKIYYAVQYDLAPPKIALIMNRPKALHFSYKRYLQNQIRKEFNFEGVPLVIASRKKGSKENDES.

EngA-type G domains follow at residues 2 to 164 (QSII…HEEF) and 196 to 368 (IRVG…ENFT). GTP contacts are provided by residues 8-15 (GKPNVGKS), 55-59 (DSGGL), 116-119 (NKVD), 202-209 (GRVNVGKS), 249-253 (DTAGI), and 313-316 (NKWD). The KH-like domain occupies 369-453 (QKIQTSKLNT…PLVIASRKKG (85 aa)).

The protein belongs to the TRAFAC class TrmE-Era-EngA-EngB-Septin-like GTPase superfamily. EngA (Der) GTPase family. Associates with the 50S ribosomal subunit.

Its function is as follows. GTPase that plays an essential role in the late steps of ribosome biogenesis. This Campylobacter jejuni subsp. jejuni serotype O:6 (strain 81116 / NCTC 11828) protein is GTPase Der.